Reading from the N-terminus, the 904-residue chain is E3 SUMO-protein ligase SIZ1 (904 aa).

The span at Met-1–Pro-13 shows a compositional bias: acidic residues. The interval Met-1 to Asn-21 is disordered. An SAP domain is found at Met-34–Leu-68. The segment at Met-122–Phe-170 is disordered. Over residues Thr-127–Ile-136 the composition is skewed to polar residues. Ser-132 is subject to Phosphoserine. Low complexity predominate over residues Arg-137–Arg-154. The region spanning Asp-162–Ile-314 is the PINIT domain. The segment at Glu-344 to Gln-431 adopts an SP-RING-type zinc-finger fold. Zn(2+) contacts are provided by Cys-377, His-379, Cys-400, and Cys-403. 3 disordered regions span residues Ile-443–Arg-584, Ser-596–Pro-616, and Ser-672–Ser-733. Over residues Leu-444–Ser-454 the composition is skewed to acidic residues. Residues Asn-501–Asn-511 are compositionally biased toward basic and acidic residues. The span at Asp-512 to Asn-553 shows a compositional bias: low complexity. 3 stretches are compositionally biased toward polar residues: residues Arg-561–Met-574, Ser-596–Ser-611, and Ser-672–Arg-683. Residues Asn-684–Leu-699 show a composition bias toward low complexity. Residues Ile-721–Ser-733 show a composition bias toward polar residues. Phosphoserine is present on Ser-794. Positions Ser-794 to Gly-904 are required for localization at the bud neck. The span at Arg-877–Thr-894 shows a compositional bias: polar residues. Residues Arg-877–Gly-904 form a disordered region.

Belongs to the PIAS family. Interacts with UBC9 and CDC3. Phosphorylated in early M-phase. In terms of processing, autosumoylated upon ethanol stress.

Its subcellular location is the cytoplasm. The protein localises to the nucleus. It localises to the bud neck. Its pathway is protein modification; protein sumoylation. In terms of biological role, acts as an E3 ligase mediating SUMO/Smt3 attachment to septins and PCNA. May be involved in chromosome maintenance. This chain is E3 SUMO-protein ligase SIZ1 (SIZ1), found in Saccharomyces cerevisiae (strain ATCC 204508 / S288c) (Baker's yeast).